Consider the following 217-residue polypeptide: Adenylate kinase (217 aa).

10-15 (GAGKGT) provides a ligand contact to ATP. The interval 30-59 (STGDIFRQNLRDNTDLGKLAKEYMDKGLLV) is NMP. AMP is bound by residues Thr31, Arg36, 57 to 59 (LLV), 85 to 88 (GYPR), and Gln92. The LID stretch occupies residues 126–163 (GRRVCPNCGATYHIKTSPPAVDNVCDKCGAQLIQRSDD). Residue Arg127 coordinates ATP. Zn(2+) is bound by residues Cys130 and Cys133. 136–137 (TY) provides a ligand contact to ATP. Zn(2+) contacts are provided by Cys150 and Cys153. 2 residues coordinate AMP: Arg160 and Arg171. An ATP-binding site is contributed by Lys199.

This sequence belongs to the adenylate kinase family. As to quaternary structure, monomer.

It localises to the cytoplasm. The enzyme catalyses AMP + ATP = 2 ADP. The protein operates within purine metabolism; AMP biosynthesis via salvage pathway; AMP from ADP: step 1/1. Catalyzes the reversible transfer of the terminal phosphate group between ATP and AMP. Plays an important role in cellular energy homeostasis and in adenine nucleotide metabolism. The polypeptide is Adenylate kinase (Thermoanaerobacter pseudethanolicus (strain ATCC 33223 / 39E) (Clostridium thermohydrosulfuricum)).